Reading from the N-terminus, the 242-residue chain is MRKSFKDSLKALEADIQFANTLASEYPEEYDGGYVQMRLSYSPAAHLFLFLLQWTDCHFAGALGLLRILIYKAYVDGKTTMSLHERKTSIREFYDVLFPSLLQLHGGITDVEERKQKEICDKRYRKKDRTDKGKMSEIDLEREEECGICLEIRNKVVLPTCNHSMCINCYRNWRARSQSCPFCRGSLKRVNSGDLWIYTCSAEIADLPAIYKENLKRLLIYIDKLPLVTSDPNLVPYAPLPR.

Residues 146–184 form an RING-type zinc finger; that stretch reads CGICLEIRNKVVLPTCNHSMCINCYRNWRARSQSCPFCR.

In terms of assembly, interacts with ATP1/SDIRIP1. Expressed in germinating seeds, flower organs and siliques.

It localises to the cytoplasm. The protein resides in the cytosol. It catalyses the reaction S-ubiquitinyl-[E2 ubiquitin-conjugating enzyme]-L-cysteine + [acceptor protein]-L-lysine = [E2 ubiquitin-conjugating enzyme]-L-cysteine + N(6)-ubiquitinyl-[acceptor protein]-L-lysine.. Its function is as follows. Possesses E3 ubiquitin-protein ligase activity in vitro when associated with the E2 enzyme UBC8 in vitro. Plays combinatory roles with AIRP1 in the positive regulation of the abscisic acid-mediated drought stress response. Plays a positive role in abscisic acid- and high salinity-regulated seed germination through the ubiquitin-proteasome-dependent down-regulation of ATP1/SDIRIP1. This Arabidopsis thaliana (Mouse-ear cress) protein is E3 ubiquitin-protein ligase AIRP2.